A 1037-amino-acid chain; its full sequence is Sentrin-specific protease 7 (1037 aa).

Over residues 1–10 (MDRARPGRRR) the composition is skewed to basic residues. Disordered stretches follow at residues 1–28 (MDRA…SPAD) and 182–420 (ASLS…SEEN). Phosphoserine is present on residues Ser-12, Ser-13, Ser-25, and Ser-189. Composition is skewed to polar residues over residues 182-211 (ASLS…NVNH) and 253-263 (TPQSKDFNSGN). Basic residues predominate over residues 289–299 (VSRKRKKRGRS). Positions 300–309 (NFHNSHNPKS) are enriched in polar residues. Basic and acidic residues-rich tracts occupy residues 310–320 (SVDKSTEYIKE) and 330–340 (KLEESNEDSHQ). The segment covering 381–399 (NKSSESSVSSEVAENSSAA) has biased composition (low complexity). 2 positions are modified to phosphoserine: Ser-432 and Ser-433. The segment at 747–1037 (LGVTNEDLEC…HLQQQKGSSS (291 aa)) is protease. His-847 is an active-site residue. Positions 873 to 910 (EFQDQQSQHDNKTIDNDPHTTSTVFTSAEESQSTETSM) are disordered. Over residues 879–890 (SQHDNKTIDNDP) the composition is skewed to basic and acidic residues. The segment covering 898-910 (TSAEESQSTETSM) has biased composition (low complexity). The active site involves Asp-926. The active-site Nucleophile is the Cys-979.

The protein belongs to the peptidase C48 family.

It localises to the cytoplasm. In terms of biological role, protease that acts as a positive regulator of the cGAS-STING pathway by catalyzing desumoylation of CGAS. Desumoylation of CGAS promotes DNA-binding activity of CGAS, subsequent oligomerization and activation. Deconjugates SUMO2 and SUMO3 from targeted proteins, but not SUMO1. Catalyzes the deconjugation of poly-SUMO2 and poly-SUMO3 chains. Has very low efficiency in processing full-length SUMO proteins to their mature forms. This is Sentrin-specific protease 7 (Senp7) from Rattus norvegicus (Rat).